Here is a 131-residue protein sequence, read N- to C-terminus: MSWQTYVDDHLMCEIEGNRLTSAAIIGQDGSVWAQSATFPQFKPEEITAIMNDFAEPGTLAPTGLYLGGTKYMVIQGEAGAVIRGKKGPGGITVKKTNQALIIGIYDEPMTPGQCNMIVERLGDYLIEQSL.

Belongs to the profilin family. In terms of assembly, occurs in many kinds of cells as a complex with monomeric actin in a 1:1 ratio.

The protein resides in the cytoplasm. It is found in the cytoskeleton. Functionally, binds to actin and affects the structure of the cytoskeleton. At high concentrations, profilin prevents the polymerization of actin, whereas it enhances it at low concentrations. By binding to PIP2, it inhibits the formation of IP3 and DG. The polypeptide is Profilin (Capsicum annuum (Capsicum pepper)).